The sequence spans 56 residues: Large ribosomal subunit protein bL33 (56 aa).

This sequence belongs to the bacterial ribosomal protein bL33 family.

This chain is Large ribosomal subunit protein bL33, found in Orientia tsutsugamushi (strain Ikeda) (Rickettsia tsutsugamushi).